A 374-amino-acid polypeptide reads, in one-letter code: MEPAPLILLAAGGTGGHLFPAEALGVVLMQRGLRVRLVTDSRALRYSGLFSREMTDVVPSETVRGRSPVALARTGAMLGAGTLKALTLMWRLKPAAVIGFGGYPTLPPLIAARLMKIPTLVHDSNAVMGRANRFLSAHVTAIATSLPGVLDRDPALAAKTTTTGTPMRPAILAAAAVPYAAPEPDGPLRLLVTGGSQGARIMADVVPHAIEQLSPELWRRLVLVQQVRDEDMARVRAVYDRLKLNFELEPFFSDLPARLASSHLVVSRSGAGTVAELAAIGRPSILVPLPGALDQDQFANAGVLAKADAAIRIAQHDFTPARLAQEITALAADPERLTAMAAGARGVGRLDAAERLADLVVEVAGIPAKTMMYQ.

UDP-N-acetyl-alpha-D-glucosamine-binding positions include 14–16 (TGG), Asn125, Arg168, Ser196, and Gln297.

It belongs to the glycosyltransferase 28 family. MurG subfamily.

It is found in the cell inner membrane. The catalysed reaction is di-trans,octa-cis-undecaprenyl diphospho-N-acetyl-alpha-D-muramoyl-L-alanyl-D-glutamyl-meso-2,6-diaminopimeloyl-D-alanyl-D-alanine + UDP-N-acetyl-alpha-D-glucosamine = di-trans,octa-cis-undecaprenyl diphospho-[N-acetyl-alpha-D-glucosaminyl-(1-&gt;4)]-N-acetyl-alpha-D-muramoyl-L-alanyl-D-glutamyl-meso-2,6-diaminopimeloyl-D-alanyl-D-alanine + UDP + H(+). It participates in cell wall biogenesis; peptidoglycan biosynthesis. In terms of biological role, cell wall formation. Catalyzes the transfer of a GlcNAc subunit on undecaprenyl-pyrophosphoryl-MurNAc-pentapeptide (lipid intermediate I) to form undecaprenyl-pyrophosphoryl-MurNAc-(pentapeptide)GlcNAc (lipid intermediate II). The polypeptide is UDP-N-acetylglucosamine--N-acetylmuramyl-(pentapeptide) pyrophosphoryl-undecaprenol N-acetylglucosamine transferase (Rhodopseudomonas palustris (strain BisA53)).